A 265-amino-acid polypeptide reads, in one-letter code: MIHDDDPNAPGAPHDDDATAAPASATRAAPAAGDDDDANPLHLRRIRSFVTRAGRVSTGQRRAIDELGPRFVIPYGSAQPDWDAIFGRRAPRVLEIGFGMGASTAEIAALRPGDDFIGVEVHEPGVGALLKLIGEQQLSNIRIIQHDAVEVLAQMIAPDSLDGVHIFFPDPWHKARHHKRRLIQPPFVAQLAAHLKPGAYLHCATDWQNYAEQMLEVLSADPSLENTAQDYAPRPGYRPVTKFERRGLRLGHGVWDLVFRKKHAG.

The disordered stretch occupies residues 1–40; that stretch reads MIHDDDPNAPGAPHDDDATAAPASATRAAPAAGDDDDANP. A compositionally biased stretch (low complexity) spans 19–32; that stretch reads TAAPASATRAAPAA. 4 residues coordinate S-adenosyl-L-methionine: E95, E120, D147, and D170. The active site involves D170. Substrate is bound by residues K174, D206, and 241 to 244; that span reads TKFE.

Belongs to the class I-like SAM-binding methyltransferase superfamily. TrmB family.

It catalyses the reaction guanosine(46) in tRNA + S-adenosyl-L-methionine = N(7)-methylguanosine(46) in tRNA + S-adenosyl-L-homocysteine. The protein operates within tRNA modification; N(7)-methylguanine-tRNA biosynthesis. Its function is as follows. Catalyzes the formation of N(7)-methylguanine at position 46 (m7G46) in tRNA. The sequence is that of tRNA (guanine-N(7)-)-methyltransferase from Burkholderia pseudomallei (strain 1710b).